A 466-amino-acid polypeptide reads, in one-letter code: Argininosuccinate lyase (466 aa).

Belongs to the lyase 1 family. Argininosuccinate lyase subfamily.

It is found in the cytoplasm. It catalyses the reaction 2-(N(omega)-L-arginino)succinate = fumarate + L-arginine. Its pathway is amino-acid biosynthesis; L-arginine biosynthesis; L-arginine from L-ornithine and carbamoyl phosphate: step 3/3. In Brucella canis (strain ATCC 23365 / NCTC 10854 / RM-666), this protein is Argininosuccinate lyase.